The primary structure comprises 441 residues: Glutamate--tRNA ligase 2 (441 aa).

A 'HIGH' region motif is present at residues 6 to 16; it reads PSPTGDMHIGN. Positions 231 to 235 match the 'KMSKS' region motif; that stretch reads KMSKR. K234 contributes to the ATP binding site.

It belongs to the class-I aminoacyl-tRNA synthetase family. Glutamate--tRNA ligase type 1 subfamily. Monomer.

The protein resides in the cytoplasm. It carries out the reaction tRNA(Glu) + L-glutamate + ATP = L-glutamyl-tRNA(Glu) + AMP + diphosphate. In terms of biological role, catalyzes the attachment of glutamate to tRNA(Glu) in a two-step reaction: glutamate is first activated by ATP to form Glu-AMP and then transferred to the acceptor end of tRNA(Glu). In Helicobacter hepaticus (strain ATCC 51449 / 3B1), this protein is Glutamate--tRNA ligase 2.